A 415-amino-acid chain; its full sequence is DNA polymerase IV (415 aa).

A UmuC domain is found at 15–196 (ILHVDMNCFF…LSVEAMHGIG (182 aa)). Mg(2+) is bound by residues D19 and D115. E116 is an active-site residue. A compositionally biased stretch (basic and acidic residues) spans 235–246 (KRAKGTDDREVD). A disordered region spans residues 235–260 (KRAKGTDDREVDPSQMGQHKSVGNSM). Positions 249 to 260 (QMGQHKSVGNSM) are enriched in polar residues.

Belongs to the DNA polymerase type-Y family. As to quaternary structure, monomer. Requires Mg(2+) as cofactor.

It localises to the cytoplasm. The catalysed reaction is DNA(n) + a 2'-deoxyribonucleoside 5'-triphosphate = DNA(n+1) + diphosphate. Its function is as follows. Poorly processive, error-prone DNA polymerase involved in untargeted mutagenesis. Copies undamaged DNA at stalled replication forks, which arise in vivo from mismatched or misaligned primer ends. These misaligned primers can be extended by PolIV. Exhibits no 3'-5' exonuclease (proofreading) activity. May be involved in translesional synthesis, in conjunction with the beta clamp from PolIII. This chain is DNA polymerase IV, found in Bacillus cereus (strain ATCC 14579 / DSM 31 / CCUG 7414 / JCM 2152 / NBRC 15305 / NCIMB 9373 / NCTC 2599 / NRRL B-3711).